The chain runs to 410 residues: BTB/POZ and MATH domain-containing protein 5 (410 aa).

The interval 1–24 is disordered; that stretch reads MSESVIQGSNPDRVLSPTSSKSVT. Residues 28 to 162 form the MATH domain; the sequence is NGSHQFVIQG…DDCLIINCTV (135 aa). The BTB domain maps to 198–264; it reads SDITFNIAGE…MYKDSLPEDV (67 aa).

This sequence belongs to the Tdpoz family. In terms of assembly, heterodimer with BPM1 and BPM3. Interacts with RAP2-4. Binds to MYB56 at the promoter of FLOWERING LOCUS T (FT). In terms of tissue distribution, ubiquitous.

The protein resides in the nucleus. It localises to the cytoplasm. It participates in protein modification; protein ubiquitination. Functionally, may act as a substrate-specific adapter of an E3 ubiquitin-protein ligase complex (CUL3-RBX1-BTB) which mediates the ubiquitination and subsequent proteasomal degradation of target proteins. This chain is BTB/POZ and MATH domain-containing protein 5 (BPM5), found in Arabidopsis thaliana (Mouse-ear cress).